The primary structure comprises 334 residues: Nucleoid-associated protein ESA_01050 (334 aa).

This sequence belongs to the YejK family.

It localises to the cytoplasm. The protein resides in the nucleoid. This chain is Nucleoid-associated protein ESA_01050, found in Cronobacter sakazakii (strain ATCC BAA-894) (Enterobacter sakazakii).